We begin with the raw amino-acid sequence, 495 residues long: N-succinylglutamate 5-semialdehyde dehydrogenase (495 aa).

Residue 228-233 (GSYATG) participates in NAD(+) binding. Active-site residues include Glu-251 and Cys-285.

This sequence belongs to the aldehyde dehydrogenase family. AstD subfamily.

It carries out the reaction N-succinyl-L-glutamate 5-semialdehyde + NAD(+) + H2O = N-succinyl-L-glutamate + NADH + 2 H(+). Its pathway is amino-acid degradation; L-arginine degradation via AST pathway; L-glutamate and succinate from L-arginine: step 4/5. Catalyzes the NAD-dependent reduction of succinylglutamate semialdehyde into succinylglutamate. This chain is N-succinylglutamate 5-semialdehyde dehydrogenase, found in Legionella pneumophila (strain Corby).